The following is a 40-amino-acid chain: Photosystem II reaction center protein J (40 aa).

Residues 8–28 form a helical membrane-spanning segment; the sequence is IPLWLIGTVTGIIVIGLLGVF.

This sequence belongs to the PsbJ family. In terms of assembly, PSII is composed of 1 copy each of membrane proteins PsbA, PsbB, PsbC, PsbD, PsbE, PsbF, PsbH, PsbI, PsbJ, PsbK, PsbL, PsbM, PsbT, PsbX, PsbY, PsbZ, Psb30/Ycf12, at least 3 peripheral proteins of the oxygen-evolving complex and a large number of cofactors. It forms dimeric complexes.

The protein localises to the plastid. Its subcellular location is the chloroplast thylakoid membrane. Functionally, one of the components of the core complex of photosystem II (PSII). PSII is a light-driven water:plastoquinone oxidoreductase that uses light energy to abstract electrons from H(2)O, generating O(2) and a proton gradient subsequently used for ATP formation. It consists of a core antenna complex that captures photons, and an electron transfer chain that converts photonic excitation into a charge separation. The protein is Photosystem II reaction center protein J of Pinus thunbergii (Japanese black pine).